Reading from the N-terminus, the 325-residue chain is MAEGRCSQGKEPAEAMISLVALGEPLIQLNAVTPGPLRYVAYFEKHVAGSEANFCIAATMAGARCSLIARVGDDEFGRNIVEYLRGRGVDVSHVKVDPGAPTGIYFVQRHFPVPGRSRLIYYRKGSAGSRVGPDDVDSSLISSADAVHSTGITLALSDSANRAVHKAFGEAKRRTFDTNIRPALWPDLAAARRAILDVLNYGVDVLVTDPDDTQILLGVRDPEEAYRKYRELGVQTLVYKLGAEGAYVFWNGGSYFRDALKVAVEDPTGAGDAVAGYFVALYLSGVDPRRALDLAVAASALVVGVRGDNEALPSPREAEELLKAL.

Substrate contacts are provided by residues 49-53 (GSEAN), Tyr105, 121-123 (YYR), and Arg181. ATP-binding positions include 179 to 181 (NIR), 240 to 245 (KLGAEG), and 269 to 272 (GAGD). Substrate is bound by residues Asp272 and Asp308. Asp272 functions as the Proton acceptor in the catalytic mechanism.

It belongs to the carbohydrate kinase PfkB family. Homohexamer; trimer of dimers.

It carries out the reaction 2-dehydro-3-deoxy-D-gluconate + ATP = 2-dehydro-3-deoxy-6-phospho-D-gluconate + ADP + H(+). The protein operates within carbohydrate acid metabolism; 2-dehydro-3-deoxy-D-gluconate degradation; D-glyceraldehyde 3-phosphate and pyruvate from 2-dehydro-3-deoxy-D-gluconate: step 1/2. In terms of biological role, involved in the degradation of glucose via the semi-phosphorylative Entner-Doudoroff pathway. Catalyzes the phosphorylation of 2-keto-3-deoxygluconate (KDG) yielding 2-keto-3-deoxy-6-phosphogluconate (KDPG). This chain is 2-dehydro-3-deoxygluconokinase (kdgK), found in Thermoproteus tenax.